The primary structure comprises 535 residues: Dual specificity calcium/calmodulin-dependent 3',5'-cyclic nucleotide phosphodiesterase 1B (535 aa).

The segment at 1 to 21 is disordered; that stretch reads MELSPRSPPEMLESDCPSPLE. 2 positions are modified to phosphoserine: Ser7 and Ser14. Calmodulin-binding stretches follow at residues 27–47 and 117–140; these read SKKM…QLEN and EKPK…MFRR. The region spanning 145-502 is the PDEase domain; that stretch reads VGPTYSTAVH…QKWKERAASG (358 aa). Catalysis depends on His222, which acts as the Proton donor. 4 residues coordinate Zn(2+): His226, His262, Asp263, and Asp369. Residue Asp263 coordinates Mg(2+). Disordered regions lie at residues 444-474 and 495-535; these read QPLA…GDPN and WKER…GNLD. The segment covering 454–463 has biased composition (polar residues); the sequence is KSQPSFQWRQ. A phosphoserine mark is found at Ser465 and Ser513.

The protein belongs to the cyclic nucleotide phosphodiesterase family. PDE1 subfamily. As to quaternary structure, homodimer. Zn(2+) serves as cofactor. Requires Mg(2+) as cofactor.

It localises to the cytoplasm. Its subcellular location is the cytosol. It carries out the reaction a nucleoside 3',5'-cyclic phosphate + H2O = a nucleoside 5'-phosphate + H(+). The enzyme catalyses 3',5'-cyclic GMP + H2O = GMP + H(+). It catalyses the reaction 3',5'-cyclic AMP + H2O = AMP + H(+). With respect to regulation, type I PDE are activated by the binding of calmodulin in the presence of Ca(2+). Functionally, cyclic nucleotide phosphodiesterase with a dual specificity for the second messengers cAMP and cGMP, which are key regulators of many important physiological processes. Has a preference for cGMP as a substrate. The sequence is that of Dual specificity calcium/calmodulin-dependent 3',5'-cyclic nucleotide phosphodiesterase 1B from Mus musculus (Mouse).